We begin with the raw amino-acid sequence, 299 residues long: Oxygen-dependent coproporphyrinogen-III oxidase (299 aa).

Substrate is bound at residue serine 92. Mn(2+)-binding residues include histidine 96 and histidine 106. Histidine 106 functions as the Proton donor in the catalytic mechanism. Residue 108 to 110 (NVR) participates in substrate binding. Positions 145 and 175 each coordinate Mn(2+). Residues 240–275 (YVEFNLVWDRGTLFGLQTGGRTESILMSMPPLVRWE) are important for dimerization. Position 258-260 (258-260 (GGR)) interacts with substrate.

Belongs to the aerobic coproporphyrinogen-III oxidase family. As to quaternary structure, homodimer. Mn(2+) serves as cofactor.

Its subcellular location is the cytoplasm. It carries out the reaction coproporphyrinogen III + O2 + 2 H(+) = protoporphyrinogen IX + 2 CO2 + 2 H2O. It participates in porphyrin-containing compound metabolism; protoporphyrin-IX biosynthesis; protoporphyrinogen-IX from coproporphyrinogen-III (O2 route): step 1/1. Involved in the heme biosynthesis. Catalyzes the aerobic oxidative decarboxylation of propionate groups of rings A and B of coproporphyrinogen-III to yield the vinyl groups in protoporphyrinogen-IX. This chain is Oxygen-dependent coproporphyrinogen-III oxidase, found in Escherichia coli O17:K52:H18 (strain UMN026 / ExPEC).